We begin with the raw amino-acid sequence, 212 residues long: Imidazole glycerol phosphate synthase subunit HisH (212 aa).

A Glutamine amidotransferase type-1 domain is found at 1-210 (MIAVINYGAG…VRWSEAVQPK (210 aa)). The Nucleophile role is filled by Cys-79. Catalysis depends on residues His-185 and Glu-187.

As to quaternary structure, heterodimer of HisH and HisF.

The protein localises to the cytoplasm. It catalyses the reaction 5-[(5-phospho-1-deoxy-D-ribulos-1-ylimino)methylamino]-1-(5-phospho-beta-D-ribosyl)imidazole-4-carboxamide + L-glutamine = D-erythro-1-(imidazol-4-yl)glycerol 3-phosphate + 5-amino-1-(5-phospho-beta-D-ribosyl)imidazole-4-carboxamide + L-glutamate + H(+). It carries out the reaction L-glutamine + H2O = L-glutamate + NH4(+). It functions in the pathway amino-acid biosynthesis; L-histidine biosynthesis; L-histidine from 5-phospho-alpha-D-ribose 1-diphosphate: step 5/9. IGPS catalyzes the conversion of PRFAR and glutamine to IGP, AICAR and glutamate. The HisH subunit catalyzes the hydrolysis of glutamine to glutamate and ammonia as part of the synthesis of IGP and AICAR. The resulting ammonia molecule is channeled to the active site of HisF. In Chloroflexus aurantiacus (strain ATCC 29364 / DSM 637 / Y-400-fl), this protein is Imidazole glycerol phosphate synthase subunit HisH.